The following is a 246-amino-acid chain: MTTAENREGYKRVMLKLGGEMFGGGKVGIDPDVVQNVARQIAEVSKSGVEVAVVIGGGNFFRGAELQQRGLDRSRSDYMGMLGTVMNCLALQDFLEQEGVDCRVQTAIQMTQVAEPYLPLRASRHLEKGRVVIFGAGMGMPYFSTDTTAAQRALEIGCEVLLMAKAVDGVYSDDPRTNPEAELFHEITPREVIEKGLKVADATAFSLCMDNKMPILVFNLLTDGNIARAVAGERIGTLVDGNVSTR.

Position 16–19 (16–19) interacts with ATP; sequence KLGG. Glycine 57 contributes to the UMP binding site. 2 residues coordinate ATP: glycine 58 and arginine 62. UMP is bound by residues aspartate 77 and 138 to 145; that span reads MGMPYFST. Tyrosine 171 and aspartate 174 together coordinate ATP.

The protein belongs to the UMP kinase family. As to quaternary structure, homohexamer.

It localises to the cytoplasm. The catalysed reaction is UMP + ATP = UDP + ADP. It functions in the pathway pyrimidine metabolism; CTP biosynthesis via de novo pathway; UDP from UMP (UMPK route): step 1/1. With respect to regulation, inhibited by UTP. Functionally, catalyzes the reversible phosphorylation of UMP to UDP. This is Uridylate kinase from Corynebacterium jeikeium (strain K411).